The primary structure comprises 1075 residues: Paired amphipathic helix protein pst2 (1075 aa).

PAH domains are found at residues S28–S102, L138–S208, and R243–S319. S641 and S643 each carry phosphoserine. Residues L647–Q700 form a disordered region. A compositionally biased stretch (basic and acidic residues) spans G658–G675. Residues N676 to G691 are compositionally biased toward low complexity.

As to quaternary structure, heterotetramer of alp13, clr6, prw1 and pst2.

The protein resides in the nucleus. Has a role in chromatin assembly and chromosome segregation. Involved in the deacetylation of histones. The sequence is that of Paired amphipathic helix protein pst2 (pst2) from Schizosaccharomyces pombe (strain 972 / ATCC 24843) (Fission yeast).